Reading from the N-terminus, the 405-residue chain is Cystathionine gamma-lyase (405 aa).

Positions 62, 114, and 119 each coordinate substrate. An N6-(pyridoxal phosphate)lysine modification is found at Lys-212. Glu-339 serves as a coordination point for substrate.

This sequence belongs to the trans-sulfuration enzymes family. As to quaternary structure, homotetramer. Interacts with CALM in a calcium-dependent manner. Pyridoxal 5'-phosphate serves as cofactor. Highly expressed in liver. Also in muscle and lower expression in most tissues except heart, pituitary gland, spleen, thymus, and vascular tissue, where it is hardly detected.

It localises to the cytoplasm. The enzyme catalyses L,L-cystathionine + H2O = 2-oxobutanoate + L-cysteine + NH4(+). It catalyses the reaction L-cysteine + H2O = hydrogen sulfide + pyruvate + NH4(+) + H(+). The catalysed reaction is L-homocysteine + H2O = 2-oxobutanoate + hydrogen sulfide + NH4(+) + H(+). It carries out the reaction L-homoserine = 2-oxobutanoate + NH4(+). The enzyme catalyses L-selenocystathionine + H2O = L-selenocysteine + 2-oxobutanoate + NH4(+). Its pathway is amino-acid biosynthesis; L-cysteine biosynthesis; L-cysteine from L-homocysteine and L-serine: step 2/2. Inhibited by propargylglycine, trifluoroalanine and aminoethoxyvinylglycine. Functionally, catalyzes the last step in the trans-sulfuration pathway from L-methionine to L-cysteine in a pyridoxal-5'-phosphate (PLP)-dependent manner, which consists on cleaving the L,L-cystathionine molecule into L-cysteine, ammonia and 2-oxobutanoate. Part of the L-cysteine derived from the trans-sulfuration pathway is utilized for biosynthesis of the ubiquitous antioxidant glutathione. Besides its role in the conversion of L-cystathionine into L-cysteine, it utilizes L-cysteine and L-homocysteine as substrates (at much lower rates than L,L-cystathionine) to produce the endogenous gaseous signaling molecule hydrogen sulfide (H2S). In vitro, it converts two L-cysteine molecules into lanthionine and H2S, also two L-homocysteine molecules to homolanthionine and H2S, which can be particularly relevant under conditions of severe hyperhomocysteinemia (which is a risk factor for cardiovascular disease, diabetes, and Alzheimer's disease). Lanthionine and homolanthionine are structural homologs of L,L-cystathionine that differ by the absence or presence of an extra methylene group, respectively. Acts as a cysteine-protein sulfhydrase by mediating sulfhydration of target proteins: sulfhydration consists of converting -SH groups into -SSH on specific cysteine residues of target proteins such as GAPDH, PTPN1 and NF-kappa-B subunit RELA, thereby regulating their function. By generating the gasotransmitter H2S, it participates in a number of physiological processes such as vasodilation, bone protection, and inflammation. Plays an essential role in myogenesis by contributing to the biogenesis of H2S in skeletal muscle tissue. Can also accept homoserine as substrate. Catalyzes the elimination of selenocystathionine (which can be derived from the diet) to yield selenocysteine, ammonia and 2-oxobutanoate. The polypeptide is Cystathionine gamma-lyase (CTH) (Homo sapiens (Human)).